The sequence spans 437 residues: Serine--tRNA ligase (437 aa).

244 to 246 (TAE) is a binding site for L-serine. 275–277 (RSE) serves as a coordination point for ATP. Glu-298 contributes to the L-serine binding site. 362 to 365 (EISS) contacts ATP. Position 397 (Ser-397) interacts with L-serine.

This sequence belongs to the class-II aminoacyl-tRNA synthetase family. Type-1 seryl-tRNA synthetase subfamily. In terms of assembly, homodimer. The tRNA molecule binds across the dimer.

It is found in the cytoplasm. The enzyme catalyses tRNA(Ser) + L-serine + ATP = L-seryl-tRNA(Ser) + AMP + diphosphate + H(+). It catalyses the reaction tRNA(Sec) + L-serine + ATP = L-seryl-tRNA(Sec) + AMP + diphosphate + H(+). It participates in aminoacyl-tRNA biosynthesis; selenocysteinyl-tRNA(Sec) biosynthesis; L-seryl-tRNA(Sec) from L-serine and tRNA(Sec): step 1/1. Catalyzes the attachment of serine to tRNA(Ser). Is also able to aminoacylate tRNA(Sec) with serine, to form the misacylated tRNA L-seryl-tRNA(Sec), which will be further converted into selenocysteinyl-tRNA(Sec). This is Serine--tRNA ligase from Nitrosomonas eutropha (strain DSM 101675 / C91 / Nm57).